We begin with the raw amino-acid sequence, 523 residues long: Ubiquitin carboxyl-terminal hydrolase 22-A (523 aa).

Residues 4-121 (AGCSHVNSFK…KEEQRKAWKL (118 aa)) form a UBP-type zinc finger. Residues Cys6, His8, Cys46, Cys49, Cys59, Cys62, Cys67, His72, His76, His82, Cys95, and Cys98 each contribute to the Zn(2+) site. The USP domain occupies 174–518 (RGLINLGNTC…EGYLLFYHKQ (345 aa)). Cys183 acts as the Nucleophile in catalysis. The active-site Proton acceptor is the His477.

It belongs to the peptidase C19 family. UBP8 subfamily. In terms of assembly, component of some SAGA transcription coactivator-HAT complexes.

Its subcellular location is the nucleus. It catalyses the reaction Thiol-dependent hydrolysis of ester, thioester, amide, peptide and isopeptide bonds formed by the C-terminal Gly of ubiquitin (a 76-residue protein attached to proteins as an intracellular targeting signal).. Histone deubiquitinating component of the transcription regulatory histone acetylation (HAT) complex SAGA. Catalyzes the deubiquitination of both histones H2A and H2B, thereby acting as a coactivator. Recruited to specific gene promoters by activators, where it is required for transcription. In Xenopus laevis (African clawed frog), this protein is Ubiquitin carboxyl-terminal hydrolase 22-A (usp22-a).